The following is a 261-amino-acid chain: uncharacterized protein (261 aa).

A divalent metal cation is bound by residues His7, His9, Glu96, His132, His156, and Asp211.

This sequence belongs to the metallo-dependent hydrolases superfamily. TatD-type hydrolase family. A divalent metal cation is required as a cofactor.

This is an uncharacterized protein from Mycoplasma pneumoniae (strain ATCC 29342 / M129 / Subtype 1) (Mycoplasmoides pneumoniae).